The primary structure comprises 284 residues: Tropomyosin (284 aa).

Positions 1–284 (MDGIKKKMIA…DQTFAELTGY (284 aa)) form a coiled coil. Composition is skewed to basic and acidic residues over residues 29-42 (LKQK…KETE) and 111-136 (AKFD…RSIA). Disordered stretches follow at residues 29-49 (LKQK…LNNR) and 111-149 (AKFD…DQQK).

The protein belongs to the tropomyosin family.

Functionally, tropomyosin, in association with the troponin complex, plays a central role in the calcium dependent regulation of muscle contraction. The sequence is that of Tropomyosin from Clonorchis sinensis (Chinese liver fluke).